The primary structure comprises 62 residues: Alpha-conotoxin-like Qc1.2 (62 aa).

Residues 1 to 21 form the signal peptide; it reads MGMRMMFTVFLLVALATTVAS. A propeptide spanning residues 22–48 is cleaved from the precursor; sequence FTLDRASNGRNAAADDKPSDWIALAIK. Glutamine 49 carries the post-translational modification Pyrrolidone carboxylic acid. Disulfide bonds link cysteine 50–cysteine 56 and cysteine 51–cysteine 61.

It belongs to the conotoxin A superfamily. Expressed by the venom duct.

Its subcellular location is the secreted. Functionally, alpha-conotoxins bind to the nicotinic acetylcholine receptors (nAChR) and inhibit them. This synthetic peptide (10 uM) selectively, but weakly inhibits both rat neuronal alpha-3-beta-2/CHRNA3-CHRNB2 (63%) and alpha-3-beta-4/CHRNA3-CHRNB4 (37%) subtypes of nAChR. The protein is Alpha-conotoxin-like Qc1.2 of Conus quercinus (Oak cone).